Reading from the N-terminus, the 224-residue chain is ATP-dependent dethiobiotin synthetase BioD (224 aa).

Position 18 (Thr18) interacts with Mg(2+). The active site involves Lys39. A substrate-binding site is contributed by Ser43. Mg(2+) is bound by residues Asp56 and Glu117. ATP contacts are provided by residues Asp56, 117 to 120 (EGVG), and 177 to 178 (NE).

It belongs to the dethiobiotin synthetase family. In terms of assembly, homodimer. Requires Mg(2+) as cofactor.

The protein resides in the cytoplasm. The catalysed reaction is (7R,8S)-7,8-diammoniononanoate + CO2 + ATP = (4R,5S)-dethiobiotin + ADP + phosphate + 3 H(+). Its pathway is cofactor biosynthesis; biotin biosynthesis; biotin from 7,8-diaminononanoate: step 1/2. Functionally, catalyzes a mechanistically unusual reaction, the ATP-dependent insertion of CO2 between the N7 and N8 nitrogen atoms of 7,8-diaminopelargonic acid (DAPA, also called 7,8-diammoniononanoate) to form a ureido ring. The polypeptide is ATP-dependent dethiobiotin synthetase BioD (Xanthomonas axonopodis pv. citri (strain 306)).